Reading from the N-terminus, the 201-residue chain is Small ribosomal subunit protein uS4 (201 aa).

The S4 RNA-binding domain maps to Ser91–Glu151.

Belongs to the universal ribosomal protein uS4 family. As to quaternary structure, part of the 30S ribosomal subunit. Contacts protein S5. The interaction surface between S4 and S5 is involved in control of translational fidelity.

Functionally, one of the primary rRNA binding proteins, it binds directly to 16S rRNA where it nucleates assembly of the body of the 30S subunit. Its function is as follows. With S5 and S12 plays an important role in translational accuracy. The sequence is that of Small ribosomal subunit protein uS4 from Mycolicibacterium gilvum (strain PYR-GCK) (Mycobacterium gilvum (strain PYR-GCK)).